Consider the following 347-residue polypeptide: MSARHGQSSYRDRSDEFFKIVETLRRSIAPAPAANNVPYGNNRNDGARREDLINKSEFNKRASHIGLAINQTSQKLSKLAKLAKRTSVFDDPTQEIQELTVVIKQEISALNSALVDLQLFRSSQNDEGNNSRDRDKSTHSATVVDDLKYRLMDTTKEFKDVLTMRTENMKVHESRRQLFSSNASKESTNPFVRQRPLAAKAAASESVPLPWANGSSSSSSQLVPWKPGEGESSPLLQQSQQQQQQQQQQMVPLQDTYMQGRAEALHTVESTIHELSSIFTQLATMVSQQGEIAIRIDQNMEDTLANVEGAQSQLARYLNSISSNRWLMMKIFFVLIAFLMIFLFFVA.

The Cytoplasmic segment spans residues 1-325 (MSARHGQSSY…RYLNSISSNR (325 aa)). 2 disordered regions span residues 172 to 191 (HESR…TNPF) and 208 to 251 (PLPW…QQMV). Polar residues-rich tracts occupy residues 177–191 (QLFS…TNPF) and 213–222 (NGSSSSSSQL). Low complexity predominate over residues 237–249 (QQSQQQQQQQQQQ). The 63-residue stretch at 255 to 317 (DTYMQGRAEA…EGAQSQLARY (63 aa)) folds into the t-SNARE coiled-coil homology domain. Residues 326–346 (WLMMKIFFVLIAFLMIFLFFV) traverse the membrane as a helical; Anchor for type IV membrane protein segment. Residue A347 is a topological domain, vesicular.

The protein belongs to the syntaxin family. Part of the t-SNARE complex.

Its subcellular location is the golgi apparatus. The protein resides in the cis-Golgi network membrane. In terms of biological role, vesicle trafficking protein that functions in the secretory pathway. This chain is Syntaxin-32 (SYP32), found in Arabidopsis thaliana (Mouse-ear cress).